A 222-amino-acid chain; its full sequence is Interleukin-12 subunit alpha (222 aa).

The N-terminal stretch at 1 to 25 is a signal peptide; the sequence is MCPPRGLLLVAILVLLNHLDHLSLA. 3 disulfides stabilise this stretch: Cys-40–Cys-113, Cys-67–Cys-199, and Cys-88–Cys-126. Asn-42, Asn-96, and Asn-110 each carry an N-linked (GlcNAc...) asparagine glycan.

This sequence belongs to the IL-6 superfamily. In terms of assembly, heterodimer with IL12B; disulfide-linked. This heterodimer is known as interleukin IL-12. Heterodimer with EBI3/IL27B; not disulfide-linked. This heterodimer is known as interleukin IL-35. Interacts with NBR1; this interaction promotes IL-12 secretion.

It is found in the secreted. Heterodimerizes with IL12B to form the IL-12 cytokine or with EBI3/IL27B to form the IL-35 cytokine. IL-12 is primarily produced by professional antigen-presenting cells (APCs) such as B-cells and dendritic cells (DCs) as well as macrophages and granulocytes and regulates T-cell and natural killer-cell responses, induces the production of interferon-gamma (IFN-gamma), favors the differentiation of T-helper 1 (Th1) cells and is an important link between innate resistance and adaptive immunity. Mechanistically, exerts its biological effects through a receptor composed of IL12R1 and IL12R2 subunits. Binding to the receptor results in the rapid tyrosine phosphorylation of a number of cellular substrates including the JAK family kinases TYK2 and JAK2. In turn, recruited STAT4 gets phosphorylated and translocates to the nucleus where it regulates cytokine/growth factor responsive genes. As part of IL-35, plays essential roles in maintaining the immune homeostasis of the liver microenvironment and also functions as an immune-suppressive cytokine. Mediates biological events through unconventional receptors composed of IL12RB2 and gp130/IL6ST heterodimers or homodimers. Signaling requires the transcription factors STAT1 and STAT4, which form a unique heterodimer that binds to distinct DNA sites. The polypeptide is Interleukin-12 subunit alpha (IL12A) (Equus caballus (Horse)).